A 208-amino-acid polypeptide reads, in one-letter code: N-hydroxyputrescine acetyltransferase (208 aa).

This sequence belongs to the IucB family.

It catalyses the reaction N-hydroxyputrescine + acetyl-CoA = N(1)-acetyl-N(1)-hydroxyputrescine + CoA. It participates in siderophore biosynthesis. Its function is as follows. N-acetyltransferase involved in the biosynthesis of fimsbactin A, the major siderophore produced by A.baumannii. Catalyzes the acetylation of N-hydroxyputrescine to form N(1)-acetyl-N(1)-hydroxyputrescine (ahPutr). The protein is N-hydroxyputrescine acetyltransferase of Acinetobacter baumannii (strain ATCC 17978 / DSM 105126 / CIP 53.77 / LMG 1025 / NCDC KC755 / 5377).